We begin with the raw amino-acid sequence, 479 residues long: Ribosomal RNA small subunit methyltransferase F (479 aa).

S-adenosyl-L-methionine-binding positions include 125 to 131, Glu-149, Asp-176, and Asp-194; that span reads AAAPGSK. The active-site Nucleophile is the Cys-247.

It belongs to the class I-like SAM-binding methyltransferase superfamily. RsmB/NOP family.

The protein resides in the cytoplasm. The catalysed reaction is cytidine(1407) in 16S rRNA + S-adenosyl-L-methionine = 5-methylcytidine(1407) in 16S rRNA + S-adenosyl-L-homocysteine + H(+). Functionally, specifically methylates the cytosine at position 1407 (m5C1407) of 16S rRNA. This Salmonella paratyphi C (strain RKS4594) protein is Ribosomal RNA small subunit methyltransferase F.